Reading from the N-terminus, the 171-residue chain is MINFNELIKVGNFNKSHGIKGEISFVFTNNFFFKGKNSFLICEMEGIFIPFRVESYRSISNSTVLVKLKNINTIEQTKLLTYQEVFLPKKQSAENTKLNYFSWDHYIGFNIIDEKNREIGSITDIDKSTINTLFIVEKESKEILIPTANEMIVTIDEKRKIIYMKLPVGLL.

A PRC barrel domain is found at 97 to 170; it reads KLNYFSWDHY…IIYMKLPVGL (74 aa).

The protein belongs to the RimM family. In terms of assembly, binds ribosomal protein uS19.

The protein resides in the cytoplasm. An accessory protein needed during the final step in the assembly of 30S ribosomal subunit, possibly for assembly of the head region. Essential for efficient processing of 16S rRNA. May be needed both before and after RbfA during the maturation of 16S rRNA. It has affinity for free ribosomal 30S subunits but not for 70S ribosomes. In Azobacteroides pseudotrichonymphae genomovar. CFP2, this protein is Ribosome maturation factor RimM.